The following is a 647-amino-acid chain: DEAD-box ATP-dependent RNA helicase 18 (647 aa).

Positions 23-51 (FSELSPALSPEVVKALKGGGFRRCTPVQA) match the Q motif motif. The region spanning 54-232 (IPLLLSHKDV…KAGLRNPVRV (179 aa)) is the Helicase ATP-binding domain. 67-74 (AATGSGKT) is a binding site for ATP. Residues 180–183 (DEAD) carry the DEAD box motif. Positions 274–430 (QLVDFLVQNN…DIVPQIRSAA (157 aa)) constitute a Helicase C-terminal domain. A coiled-coil region spans residues 507-582 (KYKDKAREKQ…RLLKKLKRGV (76 aa)). Positions 512 to 545 (AREKQRQKTLKRKAEELALRPEIEKRRKAPEKPE) are enriched in basic and acidic residues. Disordered stretches follow at residues 512–565 (AREK…KEDM) and 590–647 (KLTG…TRRR). A compositionally biased stretch (acidic residues) spans 596–610 (ESDDDDSSDGGDSDL). Residues 619 to 633 (KVLKKIKQKGKAKGS) show a composition bias toward basic residues.

The protein belongs to the DEAD box helicase family. DDX55/SPB4 subfamily. Interacts with BRI1. Phosphorylated.

It carries out the reaction ATP + H2O = ADP + phosphate + H(+). This Oryza sativa subsp. japonica (Rice) protein is DEAD-box ATP-dependent RNA helicase 18.